The following is a 178-amino-acid chain: ATP synthase subunit delta (178 aa).

Belongs to the ATPase delta chain family. In terms of assembly, F-type ATPases have 2 components, F(1) - the catalytic core - and F(0) - the membrane proton channel. F(1) has five subunits: alpha(3), beta(3), gamma(1), delta(1), epsilon(1). F(0) has three main subunits: a(1), b(2) and c(10-14). The alpha and beta chains form an alternating ring which encloses part of the gamma chain. F(1) is attached to F(0) by a central stalk formed by the gamma and epsilon chains, while a peripheral stalk is formed by the delta and b chains.

It is found in the cell membrane. In terms of biological role, f(1)F(0) ATP synthase produces ATP from ADP in the presence of a proton or sodium gradient. F-type ATPases consist of two structural domains, F(1) containing the extramembraneous catalytic core and F(0) containing the membrane proton channel, linked together by a central stalk and a peripheral stalk. During catalysis, ATP synthesis in the catalytic domain of F(1) is coupled via a rotary mechanism of the central stalk subunits to proton translocation. Functionally, this protein is part of the stalk that links CF(0) to CF(1). It either transmits conformational changes from CF(0) to CF(1) or is implicated in proton conduction. The protein is ATP synthase subunit delta of Polynucleobacter asymbioticus (strain DSM 18221 / CIP 109841 / QLW-P1DMWA-1) (Polynucleobacter necessarius subsp. asymbioticus).